Reading from the N-terminus, the 440-residue chain is Beta-1,3-galactosyl-O-glycosyl-glycoprotein beta-1,6-N-acetylglucosaminyltransferase (440 aa).

The Cytoplasmic segment spans residues 1 to 12; sequence MKMAGWKKKLCR. The helical; Signal-anchor for type II membrane protein transmembrane segment at 13–30 threads the bilayer; sequence GHHLWALGCYMLLAVVSL. Residues 31-440 are Lumenal-facing; it reads RLSLRFKCDV…RHKAIYGTEL (410 aa). N-linked (GlcNAc...) asparagine; by host glycans are attached at residues asparagine 72 and asparagine 108. Intrachain disulfides connect cysteine 73–cysteine 230, cysteine 164–cysteine 384, cysteine 185–cysteine 212, and cysteine 393–cysteine 425.

This sequence belongs to the glycosyltransferase 14 family.

The protein resides in the host Golgi apparatus membrane. The catalysed reaction is a 3-O-[beta-D-galactosyl-(1-&gt;3)-N-acetyl-alpha-D-galactosaminyl]-L-seryl-[protein] + UDP-N-acetyl-alpha-D-glucosamine = 3-O-{beta-D-galactosyl-(1-&gt;3)-[N-acetyl-beta-D-glucosaminyl-(1-&gt;6)]-N-acetyl-alpha-D-galactosaminyl}-L-seryl-[protein] + UDP + H(+). It carries out the reaction a 3-O-[beta-D-galactosyl-(1-&gt;3)-N-acetyl-alpha-D-galactosaminyl]-L-threonyl-[protein] + UDP-N-acetyl-alpha-D-glucosamine = a 3-O-{beta-D-galactosyl-(1-&gt;3)-[N-acetyl-beta-D-glucosaminyl-(1-&gt;6)]-N-acetyl-alpha-D-galactosaminyl}-L-threonyl-[protein] + UDP + H(+). The enzyme catalyses a beta-D-Gal-(1-&gt;4)-beta-D-GlcNAc-(1-&gt;3)-beta-D-Gal-(1-&gt;4)-beta-D-GlcNAc derivative + UDP-N-acetyl-alpha-D-glucosamine = a beta-D-Gal-(1-&gt;4)-beta-D-GlcNAc-(1-&gt;3)-[beta-D-GlcNAc-(1-&gt;6)]-beta-D-Gal-(1-&gt;4)-N-acetyl-beta-D-glucosaminyl derivative + UDP + H(+). It catalyses the reaction 3-O-[N-acetyl-beta-D-glucosaminyl-(1-&gt;3)-N-acetyl-alpha-D-galactosaminyl]-L-seryl-[protein] + UDP-N-acetyl-alpha-D-glucosamine = 3-O-[N-acetyl-beta-D-glucosaminyl-(1-&gt;3)-[N-acetyl-beta-D-glucosaminyl-(1-&gt;6)]-N-acetyl-alpha-D-galactosaminyl]-L-seryl-[protein] + UDP + H(+). The catalysed reaction is a 3-O-[N-acetyl-beta-D-glucosaminyl-(1-&gt;3)-N-acetyl-alpha-D-galactosaminyl]-L-threonyl-[protein] + UDP-N-acetyl-alpha-D-glucosamine = 3-O-[N-acetyl-beta-D-glucosaminyl-(1-&gt;3)-[N-acetyl-beta-D-glucosaminyl-(1-&gt;6)]-N-acetyl-alpha-D-galactosaminyl]-L-threonyl-[protein] + UDP + H(+). It participates in protein modification; protein glycosylation. Non-essential glycosyltransferase that can synthesize all known mucin beta 6 N-acetylglucosaminides. Mediates core 2 and core 4 O-glycan branching, 2 important steps in mucin-type biosynthesis. Has also I-branching enzyme activity by converting linear into branched poly-N-acetyllactosaminoglycans. Contributes to the post-translational modifications of structural proteins. This Bos taurus (Bovine) protein is Beta-1,3-galactosyl-O-glycosyl-glycoprotein beta-1,6-N-acetylglucosaminyltransferase (Bo17).